Here is a 186-residue protein sequence, read N- to C-terminus: Elongation factor P (186 aa).

Belongs to the elongation factor P family.

The protein localises to the cytoplasm. It participates in protein biosynthesis; polypeptide chain elongation. Its function is as follows. Involved in peptide bond synthesis. Stimulates efficient translation and peptide-bond synthesis on native or reconstituted 70S ribosomes in vitro. Probably functions indirectly by altering the affinity of the ribosome for aminoacyl-tRNA, thus increasing their reactivity as acceptors for peptidyl transferase. In Neisseria gonorrhoeae (strain ATCC 700825 / FA 1090), this protein is Elongation factor P.